The following is a 183-amino-acid chain: UPF0200 protein MmarC7_0527 (183 aa).

8–15 (GMPGSGKS) is an ATP binding site.

This sequence belongs to the UPF0200 family.

The chain is UPF0200 protein MmarC7_0527 from Methanococcus maripaludis (strain C7 / ATCC BAA-1331).